Here is a 74-residue protein sequence, read N- to C-terminus: DNA-directed RNA polymerase subunit omega (74 aa).

It belongs to the RNA polymerase subunit omega family. As to quaternary structure, the RNAP catalytic core consists of 2 alpha, 1 beta, 1 beta' and 1 omega subunit. When a sigma factor is associated with the core the holoenzyme is formed, which can initiate transcription.

The catalysed reaction is RNA(n) + a ribonucleoside 5'-triphosphate = RNA(n+1) + diphosphate. In terms of biological role, promotes RNA polymerase assembly. Latches the N- and C-terminal regions of the beta' subunit thereby facilitating its interaction with the beta and alpha subunits. The chain is DNA-directed RNA polymerase subunit omega from Helicobacter pylori (strain P12).